A 259-amino-acid chain; its full sequence is Translation initiation factor IF-2, chloroplastic (259 aa).

In terms of domain architecture, tr-type G spans 171 to 259 (LRAPIVAVLG…LLIIAADEGI (89 aa)). Residue 180–187 (GHVNHGKT) participates in GTP binding.

Belongs to the TRAFAC class translation factor GTPase superfamily. Classic translation factor GTPase family. IF-2 subfamily.

It localises to the plastid. The protein localises to the chloroplast. In terms of biological role, one of the essential components for the initiation of protein synthesis. Protects formylmethionyl-tRNA from spontaneous hydrolysis and promotes its binding to the 30S ribosomal subunits. Also involved in the hydrolysis of GTP during the formation of the 70S ribosomal complex. The protein is Translation initiation factor IF-2, chloroplastic (infB) of Galdieria sulphuraria (Red alga).